Here is a 567-residue protein sequence, read N- to C-terminus: ATP-dependent RNA helicase HAS1 (567 aa).

The interval methionine 1–glycine 109 is disordered. Over residues glutamate 30–aspartate 40 the composition is skewed to acidic residues. Residues glutamate 35 to tyrosine 88 adopt a coiled-coil conformation. Positions aspartate 103–alanine 131 match the Q motif motif. Residues isoleucine 134–tyrosine 310 form the Helicase ATP-binding domain. Alanine 147–threonine 154 serves as a coordination point for ATP. A DEAD box motif is present at residues aspartate 257–aspartate 260. The Helicase C-terminal domain occupies glycine 324–valine 484.

Belongs to the DEAD box helicase family. DDX18/HAS1 subfamily. In terms of assembly, associates in the nucleolus with the 60S and pre-60S ribosomal subunits.

It is found in the nucleus. The protein resides in the nucleolus. The enzyme catalyses ATP + H2O = ADP + phosphate + H(+). Functionally, ATP-dependent RNA helicase involved in 40S ribosomal subunit biogenesis. Required for the processing and cleavage of 35S pre-rRNA at sites A0, A1, and A2, leading to mature 18S rRNA. This is ATP-dependent RNA helicase HAS1 (HAS1) from Scheffersomyces stipitis (strain ATCC 58785 / CBS 6054 / NBRC 10063 / NRRL Y-11545) (Yeast).